Here is a 185-residue protein sequence, read N- to C-terminus: Ribosome-recycling factor (185 aa).

Belongs to the RRF family.

It is found in the cytoplasm. Its function is as follows. Responsible for the release of ribosomes from messenger RNA at the termination of protein biosynthesis. May increase the efficiency of translation by recycling ribosomes from one round of translation to another. The sequence is that of Ribosome-recycling factor from Clavibacter sepedonicus (Clavibacter michiganensis subsp. sepedonicus).